An 86-amino-acid chain; its full sequence is Weak toxin 1 (86 aa).

A signal peptide spans 1-23 (MKTLLLTLVVVAIVCLDLGYTLT). Disulfide bonds link C24-C45, C27-C32, C38-C63, C67-C78, and C79-C84.

It belongs to the three-finger toxin family. Ancestral subfamily. Orphan group II sub-subfamily. Expressed by the venom gland.

The protein localises to the secreted. Binds with low affinity to muscular (alpha-1-beta-1-delta-epsilon/CHRNA1-CHRNB1-CHRND-CHRNE) and very low affinity to neuronal (alpha-7/CHRNA7) nicotinic acetylcholine receptor (nAChR). This Bungarus candidus (Malayan krait) protein is Weak toxin 1.